A 122-amino-acid chain; its full sequence is UPF0102 protein XCV0816 (122 aa).

Belongs to the UPF0102 family.

The chain is UPF0102 protein XCV0816 from Xanthomonas euvesicatoria pv. vesicatoria (strain 85-10) (Xanthomonas campestris pv. vesicatoria).